The primary structure comprises 436 residues: Glucose-1-phosphate adenylyltransferase (436 aa).

Residues Y112, G178, 193-194 (EK), and S211 each bind alpha-D-glucose 1-phosphate.

It belongs to the bacterial/plant glucose-1-phosphate adenylyltransferase family. As to quaternary structure, homotetramer.

It catalyses the reaction alpha-D-glucose 1-phosphate + ATP + H(+) = ADP-alpha-D-glucose + diphosphate. The protein operates within glycan biosynthesis; glycogen biosynthesis. In terms of biological role, involved in the biosynthesis of ADP-glucose, a building block required for the elongation reactions to produce glycogen. Catalyzes the reaction between ATP and alpha-D-glucose 1-phosphate (G1P) to produce pyrophosphate and ADP-Glc. This Histophilus somni (strain 129Pt) (Haemophilus somnus) protein is Glucose-1-phosphate adenylyltransferase.